A 585-amino-acid chain; its full sequence is Frizzled-5 (585 aa).

The first 26 residues, 1–26 (MARPDPSAPPSLLLLLLAQLVGRAAA), serve as a signal peptide directing secretion. The Extracellular segment spans residues 27–238 (ASKAPVCQEI…ADERTFATFW (212 aa)). The region spanning 28-150 (SKAPVCQEIT…RDAEVLCMDY (123 aa)) is the FZ domain. Cystine bridges form between Cys-33-Cys-94, Cys-41-Cys-87, Cys-78-Cys-116, Cys-105-Cys-147, and Cys-109-Cys-133. Asn-47 is a glycosylation site (N-linked (GlcNAc...) asparagine). N-linked (GlcNAc...) asparagine glycosylation occurs at Asn-151. The segment at 156-179 (TTAPPRPFPAKPTLPGPPGAPASG) is disordered. A compositionally biased stretch (pro residues) spans 159-175 (PPRPFPAKPTLPGPPGA). Residues 239–259 (IGLWSVLCFISTSTTVATFLI) traverse the membrane as a helical segment. Over 260-270 (DMERFRYPERP) the chain is Cytoplasmic. A helical transmembrane segment spans residues 271 to 291 (IIFLSACYLCVSLGFLVRLVV). Over 292-315 (GHASVACSREHNHIHYETTGPALC) the chain is Extracellular. A helical membrane pass occupies residues 316–336 (TIVFLLVYFFGMASSIWWVIL). Topologically, residues 337-358 (SLTWFLAAGMKWGNEAIAGYAQ) are cytoplasmic. A helical transmembrane segment spans residues 359–379 (YFHLAAWLIPSVKSITALALS). Residues 380-402 (SVDGDPVAGICYVGNQNLNSLRG) lie on the Extracellular side of the membrane. Residues 403–423 (FVLGPLVLYLLVGTLFLLAGF) form a helical membrane-spanning segment. The Cytoplasmic portion of the chain corresponds to 424 to 449 (VSLFRIRSVIKQGGTKTDKLEKLMIR). Residues 450 to 470 (IGIFTLLYTVPASIVVACYLY) form a helical membrane-spanning segment. Topologically, residues 471–500 (EQHYRESWEAALTCACPGHDTGQPRAKPEY) are extracellular. A helical transmembrane segment spans residues 501–521 (WVLMLKYFMCLVVGITSGVWI). The Cytoplasmic segment spans residues 522–585 (WSGKTVESWR…YHKQVSLSHV (64 aa)). The Lys-Thr-X-X-X-Trp motif, mediates interaction with the PDZ domain of Dvl family members signature appears at 525–530 (KTVESW). The PDZ-binding motif lies at 583–585 (SHV).

It belongs to the G-protein coupled receptor Fz/Smo family. Binding of unsaturated fatty acid molecules (via FZ domain) promotes homodimerization. Interacts with WNT2B. Interacts with WNT3A. Interacts with WNT7A. Interacts with GOPC. Post-translationally, ubiquitinated by RNF43 and ZNRF3, leading to its degradation by the proteasome.

It is found in the cell membrane. The protein resides in the golgi apparatus membrane. Its subcellular location is the synapse. The protein localises to the perikaryon. It localises to the cell projection. It is found in the dendrite. The protein resides in the axon. In terms of biological role, receptor for Wnt proteins. Functions in the canonical Wnt/beta-catenin signaling pathway. In vitro activates WNT2, WNT10B, WNT5A, but not WNT2B or WNT4 signaling. In neurons, activation by WNT7A promotes formation of synapses. May be involved in transduction and intercellular transmission of polarity information during tissue morphogenesis and/or in differentiated tissues. Plays a role in yolk sac angiogenesis and in placental vascularization. Plays a role in ocular development. The polypeptide is Frizzled-5 (FZD5) (Homo sapiens (Human)).